The primary structure comprises 165 residues: MDIAHDLQVIAAQEHALVFPQFDPDRAWQVGAYLHEVAKARGIPAAIDVRTFGQPLFFSLLDGATPDNVDWARRKGNTVAHFRRSSYAIGLKMQQAGSTLADKHGLPNTEYASHGGAFPLTVAGAGVIGSITVSGLPQRADHELVVEALCAHLGHDYSKLALAKA.

It belongs to the UPF0303 family.

This is UPF0303 protein Bxeno_A1932 from Paraburkholderia xenovorans (strain LB400).